Consider the following 581-residue polypeptide: Zinc finger protein 674 (581 aa).

Residues 8-79 enclose the KRAB domain; that stretch reads LTFKDVFVDF…DGGTPVRTCA (72 aa). C2H2-type zinc fingers lie at residues 224–246, 252–274, 280–302, and 308–330; these read YKCTECGKVFIQKANLVVHQRTH, YECCECAKAFSQKSTLIAHQRTH, YECSECGKTFIQKSTLIKHQRTH, and FVCDKCPKAFKSSYHLIRHEKTH. Residues 357–371 show a composition bias toward basic and acidic residues; that stretch reads PQCSEHGKASDEKPS. The interval 357–377 is disordered; the sequence is PQCSEHGKASDEKPSPTKHWR. C2H2-type zinc fingers lie at residues 385 to 407, 413 to 435, 441 to 463, 469 to 491, 497 to 519, 525 to 547, and 553 to 575; these read YECSKCGKSFRGKSHLSVHQRIH, YECSICGKTFSGKSHLSVHHRTH, YECRRCGKAFGEKSTLIVHQRMH, YKCNECGKAFSEKSPLIKHQRIH, YECTDCKKAFSRKSTLIKHQRIH, YKCSECGKAFSVKSTLIVHHRTH, and YECRDCGKAFSGKSTLIKHQRSH.

The protein belongs to the krueppel C2H2-type zinc-finger protein family. Expressed in testis.

Its subcellular location is the nucleus. Functionally, may be involved in transcriptional regulation. This is Zinc finger protein 674 (ZNF674) from Homo sapiens (Human).